The sequence spans 982 residues: Glycine dehydrogenase (decarboxylating) (982 aa).

An N6-(pyridoxal phosphate)lysine modification is found at K721.

This sequence belongs to the GcvP family. As to quaternary structure, the glycine cleavage system is composed of four proteins: P, T, L and H. It depends on pyridoxal 5'-phosphate as a cofactor.

It carries out the reaction N(6)-[(R)-lipoyl]-L-lysyl-[glycine-cleavage complex H protein] + glycine + H(+) = N(6)-[(R)-S(8)-aminomethyldihydrolipoyl]-L-lysyl-[glycine-cleavage complex H protein] + CO2. Its function is as follows. The glycine cleavage system catalyzes the degradation of glycine. The P protein binds the alpha-amino group of glycine through its pyridoxal phosphate cofactor; CO(2) is released and the remaining methylamine moiety is then transferred to the lipoamide cofactor of the H protein. This Prochlorococcus marinus (strain MIT 9303) protein is Glycine dehydrogenase (decarboxylating).